Here is a 669-residue protein sequence, read N- to C-terminus: Threonine--tRNA ligase (669 aa).

The TGS domain maps to 3-60 (DAQQITLLVDGEETKVTTGTTGAELFFERRDVVVARVNGELKDLDQELPEGAEVEGVT). A catalytic region spans residues 260-566 (DHRKLGSELD…LTEHYAGAFP (307 aa)). Residues Cys-365, His-416, and His-543 each coordinate Zn(2+).

This sequence belongs to the class-II aminoacyl-tRNA synthetase family. Homodimer. Zn(2+) is required as a cofactor.

The protein resides in the cytoplasm. The enzyme catalyses tRNA(Thr) + L-threonine + ATP = L-threonyl-tRNA(Thr) + AMP + diphosphate + H(+). Functionally, catalyzes the attachment of threonine to tRNA(Thr) in a two-step reaction: L-threonine is first activated by ATP to form Thr-AMP and then transferred to the acceptor end of tRNA(Thr). Also edits incorrectly charged L-seryl-tRNA(Thr). The chain is Threonine--tRNA ligase from Pseudarthrobacter chlorophenolicus (strain ATCC 700700 / DSM 12829 / CIP 107037 / JCM 12360 / KCTC 9906 / NCIMB 13794 / A6) (Arthrobacter chlorophenolicus).